We begin with the raw amino-acid sequence, 353 residues long: GTPase Obg (353 aa).

Residues 1–159 (MKFIDEATIK…FELYLELKVL (159 aa)) enclose the Obg domain. Residues 160-332 (ADVGLLGMPN…LTYAIMEHVE (173 aa)) form the OBG-type G domain. GTP contacts are provided by residues 166–173 (GMPNAGKS), 191–195 (FTTLH), 213–216 (DVPG), 284–287 (NKVD), and 313–315 (SAL). Residues S173 and T193 each coordinate Mg(2+).

Belongs to the TRAFAC class OBG-HflX-like GTPase superfamily. OBG GTPase family. In terms of assembly, monomer. Mg(2+) is required as a cofactor.

The protein localises to the cytoplasm. In terms of biological role, an essential GTPase which binds GTP, GDP and possibly (p)ppGpp with moderate affinity, with high nucleotide exchange rates and a fairly low GTP hydrolysis rate. Plays a role in control of the cell cycle, stress response, ribosome biogenesis and in those bacteria that undergo differentiation, in morphogenesis control. This Methylobacillus flagellatus (strain ATCC 51484 / DSM 6875 / VKM B-1610 / KT) protein is GTPase Obg.